The chain runs to 123 residues: uncharacterized protein (123 aa).

Residue T56 is modified to Phosphothreonine. 5 positions are modified to phosphoserine: S73, S87, S97, S113, and S119.

In terms of tissue distribution, highly expressed in the kidney (at protein level).

It localises to the cytoplasm. This is an uncharacterized protein from Felis catus (Cat).